We begin with the raw amino-acid sequence, 139 residues long: Transcription antitermination protein NusB (139 aa).

This sequence belongs to the NusB family.

In terms of biological role, involved in transcription antitermination. Required for transcription of ribosomal RNA (rRNA) genes. Binds specifically to the boxA antiterminator sequence of the ribosomal RNA (rrn) operons. The chain is Transcription antitermination protein NusB from Pectobacterium carotovorum subsp. carotovorum (strain PC1).